We begin with the raw amino-acid sequence, 242 residues long: Small ribosomal subunit protein uS2 (242 aa).

This sequence belongs to the universal ribosomal protein uS2 family.

In Shewanella woodyi (strain ATCC 51908 / MS32), this protein is Small ribosomal subunit protein uS2.